The sequence spans 821 residues: Phenylalanine--tRNA ligase beta subunit (821 aa).

The 111-residue stretch at 39-149 (SENVKGIVLG…EDIALNHNLG (111 aa)) folds into the tRNA-binding domain. Residues 414–507 (LKKILIPLRR…RLIGYDMFDL (94 aa)) form the B5 domain. The Mg(2+) site is built by Asp-485, Asp-491, Glu-494, and Glu-495. Positions 727-820 (PTVPKMERDI…IEKKFSTKLR (94 aa)) constitute an FDX-ACB domain.

The protein belongs to the phenylalanyl-tRNA synthetase beta subunit family. Type 1 subfamily. In terms of assembly, tetramer of two alpha and two beta subunits. Mg(2+) is required as a cofactor.

It is found in the cytoplasm. The enzyme catalyses tRNA(Phe) + L-phenylalanine + ATP = L-phenylalanyl-tRNA(Phe) + AMP + diphosphate + H(+). This is Phenylalanine--tRNA ligase beta subunit from Prochlorococcus marinus subsp. pastoris (strain CCMP1986 / NIES-2087 / MED4).